We begin with the raw amino-acid sequence, 795 residues long: Antibiotic resistant DNA gyrase subunit B (795 aa).

In terms of domain architecture, Toprim spans 421–536; the sequence is SELYLVEGNS…RGYIYIAQPP (116 aa). The Mg(2+) site is built by E427, D501, and D503.

It belongs to the type II topoisomerase GyrB family. Heterotetramer, composed of two GyrA and two GyrB chains. In the heterotetramer, GyrA contains the active site tyrosine that forms a transient covalent intermediate with DNA, while GyrB binds cofactors and catalyzes ATP hydrolysis. Mg(2+) is required as a cofactor. The cofactor is Mn(2+). It depends on Ca(2+) as a cofactor.

The protein localises to the cytoplasm. It carries out the reaction ATP-dependent breakage, passage and rejoining of double-stranded DNA.. A type II topoisomerase that negatively supercoils closed circular double-stranded (ds) DNA in an ATP-dependent manner to modulate DNA topology and maintain chromosomes in an underwound state. Negative supercoiling favors strand separation, and DNA replication, transcription, recombination and repair, all of which involve strand separation. Also able to catalyze the interconversion of other topological isomers of dsDNA rings, including catenanes and knotted rings. Type II topoisomerases break and join 2 DNA strands simultaneously in an ATP-dependent manner. This Neisseria gonorrhoeae protein is Antibiotic resistant DNA gyrase subunit B.